Consider the following 408-residue polypeptide: Na(+)-translocating NADH-quinone reductase subunit F (408 aa).

The chain crosses the membrane as a helical span at residues 4-24 (IYLGVGMFIAIVLALVLIIMF). The 2Fe-2S ferredoxin-type domain maps to 33–127 (GEVTISINGD…DMDIELPEEI (95 aa)). [2Fe-2S] cluster is bound by residues C70, C76, C79, and C111. One can recognise an FAD-binding FR-type domain in the interval 130-270 (IKKWDCEVIS…SGPFGEFFAK (141 aa)).

Belongs to the NqrF family. As to quaternary structure, composed of six subunits; NqrA, NqrB, NqrC, NqrD, NqrE and NqrF. It depends on [2Fe-2S] cluster as a cofactor. Requires FAD as cofactor.

It is found in the cell inner membrane. The catalysed reaction is a ubiquinone + n Na(+)(in) + NADH + H(+) = a ubiquinol + n Na(+)(out) + NAD(+). In terms of biological role, NQR complex catalyzes the reduction of ubiquinone-1 to ubiquinol by two successive reactions, coupled with the transport of Na(+) ions from the cytoplasm to the periplasm. The first step is catalyzed by NqrF, which accepts electrons from NADH and reduces ubiquinone-1 to ubisemiquinone by a one-electron transfer pathway. The polypeptide is Na(+)-translocating NADH-quinone reductase subunit F (Pseudoalteromonas atlantica (strain T6c / ATCC BAA-1087)).